The following is a 262-amino-acid chain: Ribosomal RNA small subunit methyltransferase G (262 aa).

S-adenosyl-L-methionine-binding residues include Gly72, Leu77, and Arg142. Positions 212–262 (RSSQLSRAEGRKGRGDGERHDGRQVRRTARDSRRSREVDRDQPTRGQSRST) are disordered. Over residues 219 to 254 (AEGRKGRGDGERHDGRQVRRTARDSRRSREVDRDQP) the composition is skewed to basic and acidic residues.

Belongs to the methyltransferase superfamily. RNA methyltransferase RsmG family.

It is found in the cytoplasm. Its function is as follows. Specifically methylates the N7 position of guanine in position 518 of 16S rRNA. This Frankia alni (strain DSM 45986 / CECT 9034 / ACN14a) protein is Ribosomal RNA small subunit methyltransferase G.